We begin with the raw amino-acid sequence, 175 residues long: Alpha-crystallin B chain (175 aa).

An N-acetylmethionine modification is found at M1. Residue S19 is modified to Phosphoserine. O-linked (GlcNAc) serine glycosylation is present at S41. S45 and S59 each carry phosphoserine. One can recognise a sHSP domain in the interval R56–E164. H83 lines the Zn(2+) pocket. K92 is subject to N6-acetyllysine; partial. Zn(2+) is bound by residues H104, E106, H111, and H119. The disordered stretch occupies residues N146–K175. Position 166 is an N6-acetyllysine (K166). The O-linked (GlcNAc) threonine glycan is linked to T170.

It belongs to the small heat shock protein (HSP20) family. Heteromer composed of three CRYAA and one CRYAB subunits. Aggregates with homologous proteins, including the small heat shock protein HSPB1, to form large heteromeric complexes. Inter-subunit bridging via zinc ions enhances stability, which is crucial as there is no protein turn over in the lens. Interacts with HSPBAP1 and TTN/titin. Interacts with TMEM109; in the cellular response to DNA damage. Interacts with DES; binds rapidly during early stages of DES filament assembly and a reduced binding seen in the later stages. Interacts with TMED10; the interaction mediates the translocation from the cytoplasm into the ERGIC (endoplasmic reticulum-Golgi intermediate compartment) and thereby secretion. Interacts with ATP6V1A and with MTOR, forming a ternary complex. In terms of tissue distribution, lens as well as other tissues. Expressed in myocardial tissue.

It is found in the cytoplasm. It localises to the nucleus. Its subcellular location is the secreted. The protein localises to the lysosome. In terms of biological role, may contribute to the transparency and refractive index of the lens. Has chaperone-like activity, preventing aggregation of various proteins under a wide range of stress conditions. In lens epithelial cells, stabilizes the ATP6V1A protein, preventing its degradation by the proteasome. The protein is Alpha-crystallin B chain of Homo sapiens (Human).